The following is a 409-amino-acid chain: MQVTLKTLQQQTFKIDIDPEETVKALKEKIESEKGKDAFPVAGQKLIYAGKILNDDTALKEYKIDEKNFVVVMVTKPKAVSTPAPATTQQSAPASTTAVTSSTTTTVAQAPTPVPALAPTSTPASITPASATASSEPAPASAAKQEKPAEKPAETPVATSPTATDSTSGDSSRSNLFEDATSALVTGQSYENMVTEIMSMGYEREQVIAALRASFNNPDRAVEYLLMGIPGDRESQAVVDPPQAASTGAPQSSAVAAAAATTTATTTTTSSGGHPLEFLRNQPQFQQMRQIIQQNPSLLPALLQQIGRENPQLLQQISQHQEHFIQMLNEPVQEAGGQGGGGGGGSGGIAEAGSGHMNYIQVTPQEKEAIERLKALGFPEGLVIQAYFACEKNENLAANFLLQQNFDED.

The Ubiquitin-like domain occupies 1 to 79 (MQVTLKTLQQ…VVVMVTKPKA (79 aa)). Positions 80-175 (VSTPAPATTQ…STSGDSSRSN (96 aa)) are disordered. Positions 81 to 143 (STPAPATTQQ…SSEPAPASAA (63 aa)) are enriched in low complexity. Over residues 144–153 (KQEKPAEKPA) the composition is skewed to basic and acidic residues. Thr-155 carries the post-translational modification Phosphothreonine. A Phosphoserine modification is found at Ser-160. The segment covering 160–175 (SPTATDSTSGDSSRSN) has biased composition (polar residues). Thr-164 carries the post-translational modification Phosphothreonine. The residue at position 174 (Ser-174) is a Phosphoserine. The residue at position 186 (Thr-186) is a Phosphothreonine. In terms of domain architecture, UBA 1 spans 188–228 (QSYENMVTEIMSMGYEREQVIAALRASFNNPDRAVEYLLMG). Residue Ser-199 is modified to Phosphoserine. Phosphotyrosine is present on Tyr-202. Positions 236–276 (QAVVDPPQAASTGAPQSSAVAAAAATTTATTTTTSSGGHPL) are disordered. Residues 252–271 (SSAVAAAAATTTATTTTTSS) are compositionally biased toward low complexity. The STI1 domain maps to 274-317 (HPLEFLRNQPQFQQMRQIIQQNPSLLPALLQQIGRENPQLLQQI). In terms of domain architecture, UBA 2 spans 364 to 404 (PQEKEAIERLKALGFPEGLVIQAYFACEKNENLAANFLLQQ).

This sequence belongs to the RAD23 family. In terms of assembly, component of the XPC complex composed of XPC, RAD23B and CETN2. Interacts with NGLY1 and PSMC1. Interacts with ATXN3. Interacts with PSMD4 and PSMC5. Interacts with AMFR. Interacts with VCP; the interaction is indirect and mediated by NGLY1.

It localises to the nucleus. It is found in the cytoplasm. Multiubiquitin chain receptor involved in modulation of proteasomal degradation. Binds to polyubiquitin chains. Proposed to be capable to bind simultaneously to the 26S proteasome and to polyubiquitinated substrates and to deliver ubiquitinated proteins to the proteasome. May play a role in endoplasmic reticulum-associated degradation (ERAD) of misfolded glycoproteins by association with PNGase and delivering deglycosylated proteins to the proteasome. Functionally, involved in global genome nucleotide excision repair (GG-NER) by acting as component of the XPC complex. Cooperatively with CETN2 appears to stabilize XPC. May protect XPC from proteasomal degradation. Its function is as follows. The XPC complex is proposed to represent the first factor bound at the sites of DNA damage and together with other core recognition factors, XPA, RPA and the TFIIH complex, is part of the pre-incision (or initial recognition) complex. The XPC complex recognizes a wide spectrum of damaged DNA characterized by distortions of the DNA helix such as single-stranded loops, mismatched bubbles or single-stranded overhangs. The orientation of XPC complex binding appears to be crucial for inducing a productive NER. XPC complex is proposed to recognize and to interact with unpaired bases on the undamaged DNA strand which is followed by recruitment of the TFIIH complex and subsequent scanning for lesions in the opposite strand in a 5'-to-3' direction by the NER machinery. Cyclobutane pyrimidine dimers (CPDs) which are formed upon UV-induced DNA damage esacpe detection by the XPC complex due to a low degree of structural perurbation. Instead they are detected by the UV-DDB complex which in turn recruits and cooperates with the XPC complex in the respective DNA repair. In vitro, the XPC:RAD23B dimer is sufficient to initiate NER; it preferentially binds to cisplatin and UV-damaged double-stranded DNA and also binds to a variety of chemically and structurally diverse DNA adducts. XPC:RAD23B contacts DNA both 5' and 3' of a cisplatin lesion with a preference for the 5' side. XPC:RAD23B induces a bend in DNA upon binding. XPC:RAD23B stimulates the activity of DNA glycosylases TDG and SMUG1. This is UV excision repair protein RAD23 homolog B (RAD23B) from Homo sapiens (Human).